The sequence spans 209 residues: MAQRFKGRSLFLTALLCLASQGYAVGLGDMLERASQLSDKLHSLSTSLTNDLDTHFPPMGKILMPRPSMCHTASLQTPHDKDQALRVPESELLSIARALLLSWNDPLLLLASEAPTLSHPQNGAIYSKTRELQDQSNSLSSGLDRLIHKIGSSSKALSPLPLQGGDLGSDKNSRLINFYFLLSCFRRDSHKIDNFLKLLRCRAAKQDRC.

The signal sequence occupies residues 1–24 (MAQRFKGRSLFLTALLCLASQGYA). Cystine bridges form between cysteine 70/cysteine 184 and cysteine 201/cysteine 209.

The protein belongs to the somatotropin/prolactin family.

The protein localises to the secreted. This is Prolactin (prl) from Anguilla anguilla (European freshwater eel).